We begin with the raw amino-acid sequence, 1838 residues long: Nuclear pore complex protein NUP205 (1838 aa).

The protein belongs to the NUP186/NUP192/NUP205 family. As to quaternary structure, part of the nuclear pore complex (NPC). The NPC has an eight-fold symmetrical structure comprising a central transport channel and two rings, the cytoplasmic and nuclear rings, to which eight filaments are attached. The cytoplasmic filaments have loose ends, while the nuclear filaments are joined in a distal ring, forming a nuclear basket. NPCs are highly dynamic in configuration and composition, and can be devided in 3 subcomplexes, the NUP62 subcomplex, the NUP107-160 subcomplex and the NUP93 subcomplex, containing approximately 30 different nucleoporin proteins.

Its subcellular location is the nucleus envelope. It localises to the nucleus. The protein localises to the nuclear pore complex. This is Nuclear pore complex protein NUP205 from Arabidopsis thaliana (Mouse-ear cress).